The chain runs to 195 residues: MPIGIPKVLFKESTDTTPQWVDIYTRLYKDRIIFLFQLLDDDFSNQIISMLLHLDSESKEELIYFYINSVGGSVLSGISIYDTMNFINSEIVTLCIGIASSISSLILANGKRTKRFILPHSRVLLHQPIMQVSGQASDILIESEEILRLRRILTKIYIENIDQTISRVARDIDRDCFLSSREAKNYGIVDYILTN.

Residue S101 is the Nucleophile of the active site. H126 is a catalytic residue.

Belongs to the peptidase S14 family.

It is found in the plastid. The protein resides in the chloroplast stroma. It catalyses the reaction Hydrolysis of proteins to small peptides in the presence of ATP and magnesium. alpha-casein is the usual test substrate. In the absence of ATP, only oligopeptides shorter than five residues are hydrolyzed (such as succinyl-Leu-Tyr-|-NHMec, and Leu-Tyr-Leu-|-Tyr-Trp, in which cleavage of the -Tyr-|-Leu- and -Tyr-|-Trp bonds also occurs).. Cleaves peptides in various proteins in a process that requires ATP hydrolysis. Has a chymotrypsin-like activity. Plays a major role in the degradation of misfolded proteins. The polypeptide is ATP-dependent Clp protease proteolytic subunit (Bigelowiella natans (Pedinomonas minutissima)).